The chain runs to 407 residues: RNA-binding motif, single-stranded-interacting protein 2 (407 aa).

Position 1 is an N-acetylmethionine (Met1). Residues 14–51 (FGYNKNNKKPYVSLSQQMAPPSPSSSTPNSSSGSTAHD) form a disordered region. Over residues 37-47 (SSSTPNSSSGS) the composition is skewed to low complexity. RRM domains are found at residues 56-129 (TNLY…MAKQ) and 135-220 (TNLY…FADG). Ser106 is modified (phosphoserine). 2 positions are modified to phosphoserine: Ser280 and Ser285. Residues 374 to 392 (PSSSVSVEESGSQQSQVPV) are compositionally biased toward low complexity. Positions 374–398 (PSSSVSVEESGSQQSQVPVDAPSEH) are disordered.

The protein resides in the nucleus. This is RNA-binding motif, single-stranded-interacting protein 2 (RBMS2) from Bos taurus (Bovine).